A 233-amino-acid polypeptide reads, in one-letter code: uncharacterized protein (233 aa).

This is an uncharacterized protein from Methanocaldococcus jannaschii (strain ATCC 43067 / DSM 2661 / JAL-1 / JCM 10045 / NBRC 100440) (Methanococcus jannaschii).